A 1813-amino-acid polypeptide reads, in one-letter code: Latent-transforming growth factor beta-binding protein 2 (1813 aa).

A signal peptide spans 1 to 35 (MRAPTTARCSGCIQRVRWRGFLPLVLAVLMGTSHA). Residues 94–115 (NPGWLAEAEARRPPRTQQLRRV) form a heparin-binding region. The segment at 103–152 (ARRPPRTQQLRRVQPPVQTRRSHPRGQQQIAARAAPSVARLETPQRPAAA) is disordered. The segment covering 108–132 (RTQQLRRVQPPVQTRRSHPRGQQQI) has biased composition (polar residues). A glycan (N-linked (GlcNAc...) asparagine) is linked at Asn175. In terms of domain architecture, EGF-like 1 spans 181-213 (IKPVCQPPCQNRGSCSRPQVCICRSGFRGARCE). Intrachain disulfides connect Cys185–Cys195, Cys189–Cys201, and Cys203–Cys212. The tract at residues 220-305 (EFDPQNARPV…QLMSNALPSG (86 aa)) is disordered. A heparin-binding region spans residues 226–243 (ARPVPRRSVERAPGPHRS). Positions 257–266 (LVPPPSPPPS) are enriched in pro residues. The span at 293–302 (ANGQLMSNAL) shows a compositional bias: polar residues. Asn328 carries an N-linked (GlcNAc...) asparagine glycan. 329–339 (LTEKIKKIKVV) contacts heparin. One can recognise an EGF-like 2 domain in the interval 381–413 (RIYFCQIPCLNGGRCIGRDECWCPANSTGKFCH). Disulfide bonds link Cys385–Cys395, Cys389–Cys401, and Cys403–Cys412. Asn406 carries N-linked (GlcNAc...) asparagine glycosylation. At Ser491 the chain carries Phosphoserine. The interval 492-524 (VETRASHRPHGNLGHSPWASNSIPARAGEAPRP) is disordered. Positions 536 to 588 (GQCYLSTVNGQCANPLGSLTSQEDCCGSVGTFWGVTSCAPCPPRQEGPAFPVI) constitute a TB 1 domain. 3 disulfides stabilise this stretch: Cys538/Cys560, Cys547/Cys573, and Cys561/Cys576. The N-linked (GlcNAc...) asparagine glycan is linked to Asn603. The 41-residue stretch at 609-649 (DINECLTLGLCKDSECVNTRGSYLCTCRPGLMLDPSRSRCV) folds into the EGF-like 3; calcium-binding domain. 7 disulfides stabilise this stretch: Cys613–Cys624, Cys619–Cys633, Cys635–Cys648, Cys661–Cys683, Cys670–Cys696, Cys684–Cys699, and Cys685–Cys711. Residues 659–711 (GLCYRSLGSGTCTLPLVHRITKQICCCSRVGKAWGSTCEQCPLPGTEAFREIC) form the TB 2 domain. 2 disordered regions span residues 730–761 (KAEE…QPLR) and 787–819 (SAPH…PAEE). The region spanning 835-877 (DFDPCFAGASNICGPGTCVSLPNGYRCVCSPGYQLHPSQDYCT) is the EGF-like 4 domain. Cystine bridges form between Cys839-Cys852, Cys847-Cys861, Cys863-Cys876, Cys882-Cys893, Cys887-Cys902, Cys904-Cys919, Cys925-Cys936, Cys931-Cys945, Cys947-Cys959, Cys965-Cys976, Cys971-Cys985, Cys988-Cys999, Cys1005-Cys1016, Cys1011-Cys1025, Cys1027-Cys1040, Cys1046-Cys1057, Cys1052-Cys1066, Cys1069-Cys1082, Cys1088-Cys1099, Cys1094-Cys1108, Cys1111-Cys1124, Cys1130-Cys1142, Cys1137-Cys1151, Cys1153-Cys1165, Cys1171-Cys1183, Cys1177-Cys1192, Cys1194-Cys1207, Cys1213-Cys1224, Cys1219-Cys1233, Cys1235-Cys1249, Cys1255-Cys1268, Cys1263-Cys1277, Cys1281-Cys1293, Cys1299-Cys1311, Cys1305-Cys1320, Cys1322-Cys1335, Cys1341-Cys1353, Cys1348-Cys1362, Cys1364-Cys1378, Cys1405-Cys1428, Cys1415-Cys1440, Cys1429-Cys1443, Cys1430-Cys1455, Cys1481-Cys1494, Cys1489-Cys1503, Cys1505-Cys1518, Cys1524-Cys1534, Cys1529-Cys1543, and Cys1545-Cys1558. The region spanning 878 to 920 (DDNECMRNPCEGRGRCVNSVGSYSCLCYPGYTLVTLGDTQECQ) is the EGF-like 5; calcium-binding domain. The region spanning 921-960 (DIDECEQPGVCSGGRCSNTEGSYHCECDRGYIMVRKGHCQ) is the EGF-like 6; calcium-binding domain. The EGF-like 7; calcium-binding domain maps to 961 to 1000 (DINECRHPGTCPDGRCVNSPGSYTCLACEEGYVGQSGSCV). An EGF-like 8; calcium-binding domain is found at 1001 to 1041 (DVNECLTPGICTHGRCINMEGSFRCSCEPGYEVTPDKKGCR). The region spanning 1042-1083 (DVDECASRASCPTGLCLNTEGSFTCSACQSGYWVNEDGTACE) is the EGF-like 9; calcium-binding domain. The EGF-like 10; calcium-binding domain maps to 1084-1125 (DLDECAFPGVCPTGVCTNTVGSFSCKDCDQGYRPNPLGNRCE). The EGF-like 11; calcium-binding domain occupies 1126–1166 (DVDECEGPQSSCRGGECKNTEGSYQCLCHQGFQLVNGTMCE). The N-linked (GlcNAc...) asparagine glycan is linked to Asn1161. The 42-residue stretch at 1167 to 1208 (DVNECVGEEHCAPHGECLNSLGSFFCLCAPGFASAEGGTRCQ) folds into the EGF-like 12; calcium-binding domain. The EGF-like 13; calcium-binding domain maps to 1209–1250 (DVDECAATDPCPGGHCVNTEGSFSCLCETASFQPSPDSGECL). The 44-residue stretch at 1251-1294 (DIDECEDREDPVCGAWRCENSPGSYRCILDCQPGFYVAPNGDCI) folds into the EGF-like 14; calcium-binding domain. Residues 1295 to 1336 (DIDECANDTVCGNHGFCDNTDGSFRCLCDQGFETSPSGWECV) enclose the EGF-like 15; calcium-binding domain. The N-linked (GlcNAc...) asparagine glycan is linked to Asn1301. The EGF-like 16; calcium-binding domain maps to 1337-1379 (DVNECELMMAVCGDALCENVEGSFLCLCASDLEEYDAEEGHCR). The TB 3 domain maps to 1403 to 1455 (MECYSEHNGGPPCSQILGQNSTQAECCCTQGARWGKACAPCPSEDSVEFSQLC). An N-linked (GlcNAc...) asparagine glycan is attached at Asn1422. One can recognise an EGF-like 17; calcium-binding domain in the interval 1477-1519 (DADECVLFGPALCQNGRCSNIVPGYICLCNPGYHYDASSRKCQ). Positions 1520 to 1559 (DHNECQDLACENGECVNQEGSFHCLCNPPLTLDLSGQRCV) constitute an EGF-like 18; calcium-binding domain. N-linked (GlcNAc...) asparagine glycosylation occurs at Asn1560. Residues 1576 to 1628 (DICWKKVTNDVCSQPLRGHHTTYTECCCQDGEAWSQQCALCPPRSSEVYAQLC) form the TB 4 domain. Intrachain disulfides connect Cys1578–Cys1601, Cys1587–Cys1613, Cys1602–Cys1616, and Cys1603–Cys1628. The segment at 1631-1813 (ARIEAERGAG…PGPPHCAAKE (183 aa)) is C-terminal domain. Residues 1671 to 1717 (YLGPEDTAPEPPFSNPASQPGDNTPVLEPPLQPSELQPHYLASHSEP) are disordered. An EGF-like 19; calcium-binding domain is found at 1725 to 1765 (QAEECGILNGCENGRCVRVREGYTCDCFEGFQLDAPTLACV). Intrachain disulfides connect Cys1729/Cys1740, Cys1735/Cys1749, Cys1751/Cys1764, Cys1770/Cys1785, Cys1780/Cys1794, and Cys1796/Cys1809. In terms of domain architecture, EGF-like 20; calcium-binding spans 1766 to 1810 (DVNECEDLNGPARLCAHGHCENTEGSYRCHCSPGYVAEPGPPHCA).

Belongs to the LTBP family. As to quaternary structure, forms part of the large latent transforming growth factor beta precursor complex; removal is essential for activation of complex. Interacts with SDC4. Interacts (via C-terminal domain) with FBN1 (via N-terminal domain) in a Ca(+2)-dependent manner. In terms of processing, N-Glycosylated. Contains hydroxylated asparagine residues. Expressed in the anterior chamber of the eye.

It is found in the secreted. Its subcellular location is the extracellular space. The protein localises to the extracellular matrix. Functionally, may play an integral structural role in elastic-fiber architectural organization and/or assembly. This chain is Latent-transforming growth factor beta-binding protein 2 (Ltbp2), found in Mus musculus (Mouse).